A 240-amino-acid polypeptide reads, in one-letter code: Guanylate kinase (240 aa).

The region spanning 56–236 (GRIFVITGPS…TLNELKSILL (181 aa)) is the Guanylate kinase-like domain. An ATP-binding site is contributed by 63 to 70 (GPSGVGKS).

This sequence belongs to the guanylate kinase family.

It is found in the cytoplasm. The enzyme catalyses GMP + ATP = GDP + ADP. In terms of biological role, essential for recycling GMP and indirectly, cGMP. In Mycoplasma genitalium (strain ATCC 33530 / DSM 19775 / NCTC 10195 / G37) (Mycoplasmoides genitalium), this protein is Guanylate kinase (gmk).